The chain runs to 519 residues: 2-isopropylmalate synthase (519 aa).

The region spanning 5-267 (VKIFDTTLRD…NTNIRSHEIS (263 aa)) is the Pyruvate carboxyltransferase domain. Positions 14, 202, 204, and 238 each coordinate Mn(2+). The interval 392 to 519 (KLLYLQASSG…KKQQTQTAGV (128 aa)) is regulatory domain.

This sequence belongs to the alpha-IPM synthase/homocitrate synthase family. LeuA type 1 subfamily. Homodimer. The cofactor is Mn(2+).

The protein localises to the cytoplasm. The enzyme catalyses 3-methyl-2-oxobutanoate + acetyl-CoA + H2O = (2S)-2-isopropylmalate + CoA + H(+). It functions in the pathway amino-acid biosynthesis; L-leucine biosynthesis; L-leucine from 3-methyl-2-oxobutanoate: step 1/4. Functionally, catalyzes the condensation of the acetyl group of acetyl-CoA with 3-methyl-2-oxobutanoate (2-ketoisovalerate) to form 3-carboxy-3-hydroxy-4-methylpentanoate (2-isopropylmalate). The sequence is that of 2-isopropylmalate synthase from Pseudoalteromonas atlantica (strain T6c / ATCC BAA-1087).